The sequence spans 574 residues: Cytochrome P450 4g15 (574 aa).

Residues 288-327 (REREQNGGVDQTPSTAGSDEKDREKDKEKASPVAGLSYGQ) form a disordered region. A compositionally biased stretch (polar residues) spans 295-304 (GVDQTPSTAG). Residues 305–317 (SDEKDREKDKEKA) are compositionally biased toward basic and acidic residues. 2 residues coordinate heme: Glu-379 and Cys-519.

Belongs to the cytochrome P450 family. The cofactor is heme. In terms of tissue distribution, expressed in larval brain cortex cells and ring glands and weakly in larval digestive system and adult nervous system.

The protein localises to the endoplasmic reticulum membrane. The protein resides in the microsome membrane. Probably involved in steroid hormones biosynthesis. The sequence is that of Cytochrome P450 4g15 (Cyp4g15) from Drosophila melanogaster (Fruit fly).